The primary structure comprises 3072 residues: MCNFIKKGIRFNGDKYIFLFDIFIKKYLLNVFVANILWEEENNICFLNRLKNKRKKSILFLKEEYLRYLMILNKEEKNKKKRLKKIYECIKVFSIKEFRWLINKLEIIYFYFFCHLLLLCIFQNIFLLTYMSKEYFLKNIHDYMINILSNDIKFNTCIEFTHNDKYEQKCITMAYYDFLLNKKGKLKKRNKYYDIKNIEPLTGKDKNLYSYYNFSPFFPMSSSDIINVNTNDKISNILWNDKYIDTLNHVNMKKKDIPLNIHSNNILMNNYAYRKYVRSYMIKKRINDLILYNLKNIFEKINNIEKLTNINNFMNFKKEYEKVSKEVCNNNNNNYDPSDYMLILPNSSKDHALYNNINNDEYMYKKFCNFISQAREIKKQREKEKCHRDEKCDRGENYDRGEKYDRDEKYDKEEKGLKEDNYRDVNEWNSNKSERCNKIYPSDYKFFLSEDKKYDTPYYSNERVDFHNSDIYMNDMDEELYYSSYHNNHHNNDITYNSNVYKRMLNEVIHPSVESNDVKKGPLNNDNIKNKESNVYEINDIIYQLNGEKKMNTNMCEKRGNKIFDSNNFHNINERKKKILDENDMITIDNNIDKKENILFPYFHMEILKDNEMNITKYYKDKQYYGQYKYDENIYIYDLIVLDTSGYIYKVSTDGSYHWKRKIVDHIQDYSNIEEKDDERKVLKKRNKLNEKDMYESNNKYESNMYDMNTYESNKYDINTYDKNISDSTKAHQNIYVLKKNVYDMNYDSKRALKISPYHNYFNTSIINSINRDKLKHSKPLYKNNIKTNDDNKKLRENKTKNKRLVSNYLGNLFYINENNEVIPLNINIKDVVNNSPFKSPLFPNMVFIGSRESTIINLDYDTGHVLRKYDEASNELLDKPPKKKSRKNKSIKNVKDINDNMKLYKEGSQNVEELSFTEEENKKKSILEGEKIEVASLNNEENMNKGFVCEKDDKINNYDNDEDDLFYEQYEDNNDNDNNKNDNNKNDNNKNDNNKNDNNNNNNNNNNNSYYYYNINGNASDDILVHSKNELLNNTYINKTNIKDENSNNNESFLNKIDGMNNFKLLPKRNMKRNRKKNLLKRLMVSTNKLSMLLNRYHLINRSLERMRKDIKRGKNKRILKKRQLQISLIKWVIKAVDENTLKKKWITTWVDVGSIFMTDVHRKDTSFINSLIEIVGNKLILRPIEKDKMKSTTYQILKIMNNDTDEIQMYRNEDMKYEVINNVDDINNVDNINNANNMNNVNNINNMNNMNNMNNMNNMNNMNNINNMNNINNMNNINNINNINNMNNILNDRLKNRINNKDNSNIKSKIFIFSESISSVFAVKYKNLSNIFTLDIIAKPNIKLYSDYDNLNNFTYNPVHVKKERTLFLPFSKDISDLDGDKFSCSFEDNIIYGKRLIHRLNSISVNISSIEKDMKYLLSNIIYVYDKNKRIPISYIYDMKNLIYEYQKVKQEFLYHLPWDEGDQKYLSRTDDVLNNSIIDNIGKKGPIFICEYINKFMDLYFEENDICYDYCSMLNIWDKIFNNTVSDGDSLLLSNLYRVVHNAFKNNNKYNNNNIYFDNNINININSSSSSSSRSRRNIYNFDNYYNNRRDYNSFWEDRHNILMNRENFLINTSTDKVFSGGKNNELKEFTSIRYKRRRWYWRVFYTIMFIIFFPVLFIYRRIIKRRKGSSKGNKIGTSSNNKLIKKNRTFKDYEDDENNIMSEDEEDDLDMNYDLIFDDDRLKVKKIKRMRKNYNNNNNNNNNKNNNNISNNNSNSNSKSNRFLSKLSNIDLANIDLNLIKKSHGKKMDNFEQPTLVDILARHARDSTHNDGVSYYPFNENETYNMLSLNYAWGGNHKHMNVERTSEYNMGNISHQLNYNNIRNLGDNKISAYELDIYEKELFHLYRRRAASQDVLNKKSFVMKKRIRSSYKVGSSNKYHKKNYTDNEKDKKKYRSYKEKHINEKMFDKKEFLNFLTNFNKKFMKKNSLVDHLIKMNDKAEDNYDGYNSSGSRYNNINDDGVELCGTKRYTNNKNNSDYDNYNNNNNMKNKRYSNKKHNNDNIIINNNNNKYTDERKYRNKSIKEDVDYTNDYYNIQLNNNKINNNQTKNKIDTIRNISHEKLGNNKSSSARNLSLIQTSHIPYDAPLADFLENGRFLRTFENISLIGQGGFGSVYKVSHRLEPGSPTYAVKFIYLKVSSLDNVSSRRYFREIAANRDIYSKHVVRYYTWWCEEPQFLPMHLMPKEIQNLVKKNKDTFKKRLTKNKKYSNNCISDSSNNNNSSCYSASSYNSSINSNYRNMKLWIKKKEQSPDMKRYKEVLRKNNAPNLVFYSDNDGLTSKNKENPEKNHNPFLSDKNFSDSIYKKKKSHDYNSSSHKLKKRKNKKKKSKKKRKSKSKIKTNAQGIYEESENDEGRDHFQYKKGKEQFSKFIGKHNSMGFTQSFQEYDPFDNGYLSEEDRDLIVFADNEESNGNDQQMIRHDNMNNENVIIKHRNEDDKNGLDGDKNGLDGDKNGLDGDKNGLDGDKNGLDGDKNELDGDKNGLDGDKNGLDGDKNGLDGDKNELDDNTKKLDDNTKKLDDLLMKQKINSLTRNDIVNIENENPAPHATNNIKNKKVDLNGELTYYDYVGKNEVIPNSRTETNVESINTNGMFNNKFSVMKDEGGEYKKKENMTWGDTKRDGLYENGKHEKDGLGVNKCITNKYIENDDDDDDDDDNNNNNNNIDERKKDLKKKQKNAITKGNEDLLATNGTNNKEKRKKDDDINKNMEKIKSYKKKTPVPEFSIVLLLQMELCKGYTLRKWLDRSTRSDKPLHFTYSDKKMNHPLEFDLFKQLIKGLKDIHATCFIHRDLKPENIFVDPDTYTLKIGDLGLVRFIEEKKREKDFNNIDCYKDNIYTDINQNAITSQISIKGQIIGTPGYTAPEGGALCDEKADIYSAALILLELLCPRFTTIMERYKRLNDFRNYYTVPDYVKIHLNPWYILMLQMSKPNPADRPSAADVYSKIKVLLDPHLTDFAFSFNDIHNEHMNKPPQGTNNFERITDNKDKFVIQSVVDMKNKVENEEIPIEKGLNSNVENIKNENNGADK.

Over 1 to 106 (MCNFIKKGIR…EFRWLINKLE (106 aa)) the chain is Cytoplasmic. A helical membrane pass occupies residues 107–127 (IIYFYFFCHLLLLCIFQNIFL). Topologically, residues 128–1643 (LTYMSKEYFL…FTSIRYKRRR (1516 aa)) are lumenal. The interval 383-402 (KEKCHRDEKCDRGENYDRGE) is disordered. The tract at residues 576 to 610 (KKKILDENDMITIDNNIDKKENILFPYFHMEILKD) is 10 X 7 AA tandem repeat of D-K-N-[GE]-L-D-[GD]. The disordered stretch occupies residues 970–1010 (QYEDNNDNDNNKNDNNKNDNNKNDNNKNDNNNNNNNNNNNS). Residues 978–996 (DNNKNDNNKNDNNKNDNNK) show a composition bias toward basic and acidic residues. Residues 997–1009 (NDNNNNNNNNNNN) show a composition bias toward low complexity. Residues 1644–1664 (WYWRVFYTIMFIIFFPVLFIY) traverse the membrane as a helical segment. At 1665-3072 (RRIIKRRKGS…IKNENNGADK (1408 aa)) the chain is on the cytoplasmic side. Disordered stretches follow at residues 1737–1766 (KNYN…SKSN) and 1917–1937 (KVGS…KDKK). Over residues 1738-1766 (NYNNNNNNNNNKNNNNISNNNSNSNSKSN) the composition is skewed to low complexity. Positions 1928–1937 (NYTDNEKDKK) are enriched in basic and acidic residues. ATP contacts are provided by residues 2152–2160 (IGQGGFGSV) and Lys-2177. 3 disordered regions span residues 2316–2402 (FYSD…EGRD), 2479–2558 (RNED…KKLD), and 2691–2749 (ENDD…DDDI). The segment covering 2326 to 2335 (KNKENPEKNH) has biased composition (basic and acidic residues). Over residues 2362-2384 (HKLKKRKNKKKKSKKKRKSKSKI) the composition is skewed to basic residues. Tandem repeats lie at residues 2483–2489 (DKNGLDG), 2490–2496 (DKNGLDG), 2497–2503 (DKNGLDG), 2504–2510 (DKNGLDG), 2511–2517 (DKNGLDG), 2518–2524 (DKNELDG), 2525–2531 (DKNGLDG), 2532–2538 (DKNGLDG), 2539–2545 (DKNGLDG), and 2546–2552 (DKNELDD). In terms of domain architecture, Protein kinase spans 2627–2998 (TNVESINTNG…KIKVLLDPHL (372 aa)). The span at 2692-2702 (NDDDDDDDDDN) shows a compositional bias: acidic residues. The Proton acceptor role is filled by Asp-2835. Thr-2902 carries the phosphothreonine modification.

This sequence belongs to the protein kinase superfamily. Ser/Thr protein kinase family. GCN2 subfamily. In terms of assembly, may form oligomers in response to stress; oligomerization may result in catalytic activity. Interacts with BIP; the interaction is disrupted in response to stress. Post-translationally, auto-phosphorylated.

The protein localises to the endoplasmic reticulum membrane. The enzyme catalyses L-seryl-[protein] + ATP = O-phospho-L-seryl-[protein] + ADP + H(+). It carries out the reaction L-threonyl-[protein] + ATP = O-phospho-L-threonyl-[protein] + ADP + H(+). Its activity is regulated as follows. Dissociation from BIP and oligomerization, may results autophosphorylation and kinase activity induction. Functionally, during the asexual blood stage, phosphorylates translation factor eIF2alpha in late schizonts resulting in protein translation inhibition. Plays a role in trophozoite differentiation into schizonts. This is Eukaryotic translation initiation factor 2-alpha kinase PK4 from Plasmodium falciparum (isolate 3D7).